Consider the following 396-residue polypeptide: Acetyl-CoA acetyltransferase ERG10, cytosolic (396 aa).

The active-site Acyl-thioester intermediate is cysteine 91. Tyrosine 186 is a K(+) binding site. Asparagine 227 and lysine 230 together coordinate CoA. K(+) is bound by residues alanine 246, proline 247, and valine 347. Active-site proton acceptor residues include histidine 351 and cysteine 381. Asparagine 382 contacts chloride.

The protein belongs to the thiolase-like superfamily. Thiolase family. In terms of assembly, homotetramer. It depends on K(+) as a cofactor.

Its subcellular location is the cytoplasm. The protein localises to the cytosol. It catalyses the reaction 2 acetyl-CoA = acetoacetyl-CoA + CoA. It participates in metabolic intermediate biosynthesis; (R)-mevalonate biosynthesis; (R)-mevalonate from acetyl-CoA: step 1/3. Functionally, acetyl-CoA acetyltransferase; part of the first module of ergosterol biosynthesis pathway that includes the early steps of the pathway, conserved across all eukaryotes, and which results in the formation of mevalonate from acetyl-coenzyme A (acetyl-CoA). ERG10B catalyzes the formation of acetoacetyl-CoA from acetyl-CoA. The first module starts with the action of the cytosolic acetyl-CoA acetyltransferase ERG10B that catalyzes the formation of acetoacetyl-CoA. The hydroxymethylglutaryl-CoA synthases ERG13 then condenses acetyl-CoA with acetoacetyl-CoA to form HMG-CoA. The rate-limiting step of the early module is the reduction to mevalonate by the 3-hydroxy-3-methylglutaryl-coenzyme A (HMG-CoA) reductases HMG1. This is Acetyl-CoA acetyltransferase ERG10, cytosolic from Gibberella zeae (strain ATCC MYA-4620 / CBS 123657 / FGSC 9075 / NRRL 31084 / PH-1) (Wheat head blight fungus).